The following is a 111-amino-acid chain: Small ribosomal subunit protein bS16 (111 aa).

The protein belongs to the bacterial ribosomal protein bS16 family.

In Rickettsia typhi (strain ATCC VR-144 / Wilmington), this protein is Small ribosomal subunit protein bS16.